Reading from the N-terminus, the 352-residue chain is Neutral protease 2 (352 aa).

An N-terminal signal peptide occupies residues 1–19 (MRVTTLSTALFALASTAVS). A propeptide spanning residues 20-175 (APTAGSSSPG…TKALSQLTRR (156 aa)) is cleaved from the precursor. 3 disulfide bridges follow: C181–C253, C260–C278, and C292–C352. H303 is a Zn(2+) binding site. Residue E304 is part of the active site. Zn(2+) is bound by residues H307 and D318.

Belongs to the peptidase M35 family. Zn(2+) serves as cofactor.

The enzyme catalyses Preferential cleavage of bonds with hydrophobic residues in P1'. Also 3-Asn-|-Gln-4 and 8-Gly-|-Ser-9 bonds in insulin B chain.. Functionally, metalloprotease that shows high activities on basic nuclear substrates such as histone and protamine. This Aspergillus oryzae (strain ATCC 42149 / RIB 40) (Yellow koji mold) protein is Neutral protease 2.